The primary structure comprises 324 residues: Lactonase drp35 (324 aa).

Ca(2+) is bound by residues E47, S109, G111, D129, T132, Y134, D137, N184, D235, and S236. Catalysis depends on D235, which acts as the Proton donor.

Belongs to the SMP-30/CGR1 family. The cofactor is Ca(2+).

Its subcellular location is the cytoplasm. Functionally, exhibits lactonase activity. Acts in cells with perturbed membrane integrity and is possibly related to the membrane homeostasis. In Staphylococcus saprophyticus subsp. saprophyticus (strain ATCC 15305 / DSM 20229 / NCIMB 8711 / NCTC 7292 / S-41), this protein is Lactonase drp35 (drp35).